Reading from the N-terminus, the 141-residue chain is Lutropin subunit beta (141 aa).

Positions 1–21 (MERYQELTVLLLLLLLEGGSG) are cleaved as a signal peptide. Cystine bridges form between Cys-30–Cys-78, Cys-44–Cys-93, Cys-47–Cys-131, Cys-55–Cys-109, Cys-59–Cys-111, and Cys-114–Cys-121. N-linked (GlcNAc...) asparagine glycosylation occurs at Asn-34.

Belongs to the glycoprotein hormones subunit beta family. As to quaternary structure, heterodimer of a common alpha chain and a unique beta chain which confers biological specificity to thyrotropin, lutropin, follitropin and gonadotropin.

The protein localises to the secreted. Its function is as follows. Promotes spermatogenesis and ovulation by stimulating the testes and ovaries to synthesize steroids. This Monodelphis domestica (Gray short-tailed opossum) protein is Lutropin subunit beta (LHB).